We begin with the raw amino-acid sequence, 547 residues long: TBCC domain-containing protein 1 (547 aa).

The region spanning 304-435 (PHTHRMVVMS…LEDHMAHTGL (132 aa)) is the C-CAP/cofactor C-like domain.

The protein belongs to the TBCC family.

The protein resides in the cytoplasm. It localises to the cytoskeleton. The protein localises to the microtubule organizing center. Its subcellular location is the centrosome. It is found in the spindle pole. Functionally, may play a role in the regulation of centrosome and Golgi apparatus positioning. The polypeptide is TBCC domain-containing protein 1 (tbccd1) (Xenopus tropicalis (Western clawed frog)).